Here is a 110-residue protein sequence, read N- to C-terminus: Phosphoribosyl-ATP pyrophosphatase (110 aa).

The protein belongs to the PRA-PH family.

It localises to the cytoplasm. It catalyses the reaction 1-(5-phospho-beta-D-ribosyl)-ATP + H2O = 1-(5-phospho-beta-D-ribosyl)-5'-AMP + diphosphate + H(+). It functions in the pathway amino-acid biosynthesis; L-histidine biosynthesis; L-histidine from 5-phospho-alpha-D-ribose 1-diphosphate: step 2/9. The polypeptide is Phosphoribosyl-ATP pyrophosphatase (Clostridium novyi (strain NT)).